Reading from the N-terminus, the 268-residue chain is Hydroxyethylthiazole kinase (268 aa).

Position 45 (methionine 45) interacts with substrate. Residues arginine 121 and threonine 167 each contribute to the ATP site. Residue glycine 194 participates in substrate binding.

The protein belongs to the Thz kinase family. The cofactor is Mg(2+).

It carries out the reaction 5-(2-hydroxyethyl)-4-methylthiazole + ATP = 4-methyl-5-(2-phosphooxyethyl)-thiazole + ADP + H(+). The protein operates within cofactor biosynthesis; thiamine diphosphate biosynthesis; 4-methyl-5-(2-phosphoethyl)-thiazole from 5-(2-hydroxyethyl)-4-methylthiazole: step 1/1. Its function is as follows. Catalyzes the phosphorylation of the hydroxyl group of 4-methyl-5-beta-hydroxyethylthiazole (THZ). This chain is Hydroxyethylthiazole kinase, found in Bacillus cereus (strain ATCC 10987 / NRS 248).